A 241-amino-acid polypeptide reads, in one-letter code: MKKTIFVGDLHLSADRPDITQAFIYFLNHGLDNTEALYIIGDLFEVWMGDDIAESFTIAIAEAIKTVSNSIPVYFTHGNRDFMVDKQFCLRAGMKILPEVYCINLYGVNTVILHGDSLCTLDIAYQRFRRFRSLDIVRWVYSHLPKKTRLNIAAKIRQKSVQGNQQKHYEIMDVESSAVTALLASTGCQRMIHGHTHRPAIHQLTAQEQRVVVGDWYTQGSVLNVSEKGCELVTLPFSETN.

5 residues coordinate Mn(2+): Asp-9, His-11, Asp-42, Asn-79, and His-114. 79-80 (NR) is a substrate binding site. Residues Asp-122, Ser-160, Asn-164, Lys-167, and His-195 each coordinate substrate. Mn(2+) contacts are provided by His-195 and His-197.

Belongs to the LpxH family. Requires Mn(2+) as cofactor.

Its subcellular location is the cell inner membrane. The enzyme catalyses UDP-2-N,3-O-bis[(3R)-3-hydroxytetradecanoyl]-alpha-D-glucosamine + H2O = 2-N,3-O-bis[(3R)-3-hydroxytetradecanoyl]-alpha-D-glucosaminyl 1-phosphate + UMP + 2 H(+). The protein operates within glycolipid biosynthesis; lipid IV(A) biosynthesis; lipid IV(A) from (3R)-3-hydroxytetradecanoyl-[acyl-carrier-protein] and UDP-N-acetyl-alpha-D-glucosamine: step 4/6. In terms of biological role, hydrolyzes the pyrophosphate bond of UDP-2,3-diacylglucosamine to yield 2,3-diacylglucosamine 1-phosphate (lipid X) and UMP by catalyzing the attack of water at the alpha-P atom. Involved in the biosynthesis of lipid A, a phosphorylated glycolipid that anchors the lipopolysaccharide to the outer membrane of the cell. The sequence is that of UDP-2,3-diacylglucosamine hydrolase from Shewanella frigidimarina (strain NCIMB 400).